Here is a 290-residue protein sequence, read N- to C-terminus: MFRILMFLATNIAVMVLISLVFSLFGFQGLLAQNGVDLDLQALLVYSAVIGFSGSIISLLISKFMAKRSMNVHVLEHPENDTERWLLRTVERQAEQANIGMPEVGIFVHASPNAFATGWNKNNALVAVSTGLLENMTQSEVEAVLAHEISHVANGDMVTMTLIQGVLNTFVVFLSRVIGHVVDRVVFKVERGHGPAFWIVSIISQVILGILASMIVMWFSRYREFRADAGGASIAGRNNMIAALKRLKQNQDAPPMPEEMAAFAISAGKVQKLFSSHPPLDKRIEALQKG.

2 consecutive transmembrane segments (helical) span residues 12–32 (IAVM…GLLA) and 42–62 (ALLV…LLIS). Histidine 147 is a binding site for Zn(2+). The active site involves glutamate 148. Histidine 151 contributes to the Zn(2+) binding site. The next 2 helical transmembrane spans lie at 162 to 182 (LIQG…GHVV) and 197 to 217 (FWIV…MIVM). Zn(2+) is bound at residue glutamate 224.

This sequence belongs to the peptidase M48B family. Zn(2+) is required as a cofactor.

The protein resides in the cell inner membrane. The protein is Protease HtpX of Pseudoalteromonas atlantica (strain T6c / ATCC BAA-1087).